The primary structure comprises 346 residues: Signal recognition particle receptor FtsY (346 aa).

GTP contacts are provided by residues 143–150, 225–229, and 289–292; these read GVNGVGKT, DTSGR, and TKMD.

This sequence belongs to the GTP-binding SRP family. FtsY subfamily. In terms of assembly, part of the signal recognition particle protein translocation system, which is composed of SRP and FtsY.

Its subcellular location is the cell membrane. The protein resides in the cytoplasm. It catalyses the reaction GTP + H2O = GDP + phosphate + H(+). Functionally, involved in targeting and insertion of nascent membrane proteins into the cytoplasmic membrane. Acts as a receptor for the complex formed by the signal recognition particle (SRP) and the ribosome-nascent chain (RNC). This chain is Signal recognition particle receptor FtsY, found in Mycoplasma genitalium (strain ATCC 33530 / DSM 19775 / NCTC 10195 / G37) (Mycoplasmoides genitalium).